A 327-amino-acid polypeptide reads, in one-letter code: Probable protein phosphatase 2C 59 (327 aa).

An N-terminal signal peptide occupies residues 1–24 (MREVLLLGSLVVLALLSLFPCCSC). One can recognise a PPM-type phosphatase domain in the interval 64–310 (SYGYASSPGK…DNITCLVVRF (247 aa)). Positions 100, 101, 262, and 301 each coordinate Mn(2+).

Belongs to the PP2C family. Mg(2+) serves as cofactor. Requires Mn(2+) as cofactor.

It catalyses the reaction O-phospho-L-seryl-[protein] + H2O = L-seryl-[protein] + phosphate. It carries out the reaction O-phospho-L-threonyl-[protein] + H2O = L-threonyl-[protein] + phosphate. In Oryza sativa subsp. japonica (Rice), this protein is Probable protein phosphatase 2C 59.